The primary structure comprises 283 residues: Large ribosomal subunit protein mL46 (283 aa).

Lys-217 carries the post-translational modification N6-succinyllysine. Residue Lys-228 is modified to N6-acetyllysine. Position 246 is an N6-succinyllysine (Lys-246).

This sequence belongs to the mitochondrion-specific ribosomal protein mL46 family. Component of the mitochondrial ribosome large subunit (39S) which comprises a 16S rRNA and about 50 distinct proteins.

It is found in the mitochondrion. The protein is Large ribosomal subunit protein mL46 (Mrpl46) of Mus musculus (Mouse).